A 392-amino-acid chain; its full sequence is Stilbene synthase 3 (392 aa).

55 to 58 (KFNR) provides a ligand contact to substrate. The active site involves Cys-164. Substrate contacts are provided by residues Leu-267 and 305–307 (GGP).

Belongs to the thiolase-like superfamily. Chalcone/stilbene synthases family. Homodimer.

Its subcellular location is the cytoplasm. The enzyme catalyses 4-coumaroyl-CoA + 3 malonyl-CoA + 3 H(+) = trans-resveratrol + 4 CO2 + 4 CoA. The protein operates within phytoalexin biosynthesis; 3,4',5-trihydroxystilbene biosynthesis; 3,4',5-trihydroxystilbene from trans-4-coumarate: step 2/2. In terms of biological role, mediates resistance to pathogens which are sensitive to stilbenes. In Vitis vinifera (Grape), this protein is Stilbene synthase 3.